The following is a 143-amino-acid chain: Cold shock domain-containing protein CG9705 (143 aa).

The interval 1–30 (MTEPRTPEKLLAAKPPVLHHNSHSPNASLQ) is disordered. Phosphoserine is present on residues S22, S24, S28, and S33. The region spanning 54-121 (VVTGMVKSFS…KHQAVHVQIS (68 aa)) is the CSD domain. Phosphoserine is present on residues S139 and S140.

The protein is Cold shock domain-containing protein CG9705 of Drosophila melanogaster (Fruit fly).